The chain runs to 445 residues: Tubby-like F-box protein 8 (445 aa).

The region spanning 56–102 (ESRWASLPPELLRDVIRRLEASESTWPSRKDVVSCAAVCKAWREMCK) is the F-box domain.

This sequence belongs to the TUB family. Ubiquitous.

The sequence is that of Tubby-like F-box protein 8 (TULP8) from Oryza sativa subsp. japonica (Rice).